A 116-amino-acid polypeptide reads, in one-letter code: Large ribosomal subunit protein bL20 (116 aa).

Belongs to the bacterial ribosomal protein bL20 family.

Functionally, binds directly to 23S ribosomal RNA and is necessary for the in vitro assembly process of the 50S ribosomal subunit. It is not involved in the protein synthesizing functions of that subunit. The polypeptide is Large ribosomal subunit protein bL20 (Helicobacter acinonychis (strain Sheeba)).